The primary structure comprises 400 residues: WW domain-containing transcription regulator protein 1 (400 aa).

K46 is covalently cross-linked (Glycyl lysine isopeptide (Lys-Gly) (interchain with G-Cter in ubiquitin)). A disordered region spans residues 52-117; it reads FFKEPDSGSH…QQHAHLRQQS (66 aa). Polar residues predominate over residues 61–70; sequence HSRQSSTDSS. Phosphoserine is present on residues S62 and S89. Low complexity predominate over residues 91-110; the sequence is PASLQLGPGAGAAGSPAQQH. The 34-residue stretch at 124–157 folds into the WW domain; sequence LPLPPGWEMTFTATGQRYFLNHIEKITTWQDPRK. A compositionally biased stretch (polar residues) spans 192–211; that stretch reads NHQHQQQMAPTNLSQQNHPT. Residues 192–216 are disordered; sequence NHQHQQQMAPTNLSQQNHPTQNPPA. Residues 222 to 400 form a required for interaction with PALS1 region; sequence PNALTTQQQQ…NKSEPFLTWL (179 aa). Phosphoserine occurs at positions 295 and 311. Residues 394 to 400 carry the PDZ-binding motif; sequence EPFLTWL.

Binds to SLC9A3R2 via the PDZ motif at the plasma membrane. Binds to YWHAZ in vivo and in vitro through the phosphoserine-binding motif RSHSSP. Interacts (via coiled-coil domain) with SMAD2 (via MH1 domain), SMAD3 and SMAD4. Interacts with MED15. Interacts with PAX8 and NKX2-1. Interacts with TEAD1, TEAD2, TEAD3 and TEAD4. Interacts (via WW domain) with PALS1. Interacts with LATS1. Interacts with YAP1 (when phosphorylated at 'Ser-112'). Interacts (via WW domain) with PRRG4 (via cytoplasmic domain). Interacts (via WW domain) with AMOTL2 (via PPXY motif); the interaction promotes WWTR1/TAZ localization to the cytoplasm and tight junctions, thereby inhibiting its transcriptional coactivator properties. Interacts (via WW domain) with AMOT; the interaction facilitates translocation of WWTR1/TAZ to the cytoplasm. In terms of processing, phosphorylated by LATS2 and STK3/MST2. Phosphorylation by LATS2 results in creation of 14-3-3 binding sites, retention in the cytoplasm, and functional inactivation. Phosphorylation results in the inhibition of transcriptional coactivation through YWHAZ-mediated nuclear export. Ubiquitinated at Lys-46; leading to proteasomal degradation. Deubiquitinated and stabilized by UCHL1 at Lys-46; leading to inhibition of osteoclastogenesis.

It localises to the cytoplasm. It is found in the nucleus. Its subcellular location is the cell membrane. The protein localises to the cell junction. The protein resides in the tight junction. Functionally, transcriptional coactivator which acts as a downstream regulatory target in the Hippo signaling pathway that plays a pivotal role in organ size control and tumor suppression by restricting proliferation and promoting apoptosis. The core of this pathway is composed of a kinase cascade wherein STK3/MST2 and STK4/MST1, in complex with its regulatory protein SAV1, phosphorylates and activates LATS1/2 in complex with its regulatory protein MOB1, which in turn phosphorylates and inactivates YAP1 oncoprotein and WWTR1/TAZ. WWTR1 enhances PAX8 and NKX2-1/TTF1-dependent gene activation. In conjunction with YAP1, involved in the regulation of TGFB1-dependent SMAD2 and SMAD3 nuclear accumulation. Plays a key role in coupling SMADs to the transcriptional machinery such as the mediator complex. Regulates embryonic stem-cell self-renewal, promotes cell proliferation and epithelial-mesenchymal transition. The polypeptide is WW domain-containing transcription regulator protein 1 (Canis lupus familiaris (Dog)).